Here is a 118-residue protein sequence, read N- to C-terminus: Large ribosomal subunit protein bL19 (118 aa).

This sequence belongs to the bacterial ribosomal protein bL19 family.

This protein is located at the 30S-50S ribosomal subunit interface and may play a role in the structure and function of the aminoacyl-tRNA binding site. This Ligilactobacillus salivarius (strain UCC118) (Lactobacillus salivarius) protein is Large ribosomal subunit protein bL19.